The chain runs to 624 residues: tRNA uridine 5-carboxymethylaminomethyl modification enzyme MnmG (624 aa).

FAD contacts are provided by residues 13–18 (GAGHAG), V125, and S180. An NAD(+)-binding site is contributed by 272–286 (GPRYCPSIEDKVVKF). Q369 lines the FAD pocket.

Belongs to the MnmG family. In terms of assembly, homodimer. Heterotetramer of two MnmE and two MnmG subunits. The cofactor is FAD.

The protein resides in the cytoplasm. Functionally, NAD-binding protein involved in the addition of a carboxymethylaminomethyl (cmnm) group at the wobble position (U34) of certain tRNAs, forming tRNA-cmnm(5)s(2)U34. This is tRNA uridine 5-carboxymethylaminomethyl modification enzyme MnmG from Thermodesulfovibrio yellowstonii (strain ATCC 51303 / DSM 11347 / YP87).